Reading from the N-terminus, the 469-residue chain is Coiled-coil domain-containing protein 6 (469 aa).

Positions 1-10 are enriched in acidic residues; sequence MADSASESDT. Residues 1 to 37 are disordered; that stretch reads MADSASESDTDAAGGGPAAMQSSCSATSGGSGGGGGG. An N-acetylalanine modification is found at Ala-2. Ser-45 is subject to Phosphoserine. Positions 47–320 form a coiled coil; sequence FRLEELTNRL…LCRQLSESES (274 aa). 3 repeat units span residues 99–127, 128–156, and 157–185. Positions 99 to 228 are 5 X 29 AA tandem repeats; sequence EQEEEFISNT…AEKRILQEKL (130 aa). Residues 186-199 form a 4; approximate repeat; sequence EQLRREKIDLENTL. The stretch at 200-228 is repeat 5; sequence EQEQEALVNRLWKRMDKLEAEKRILQEKL. Phosphoserine occurs at positions 233, 237, 242, 247, 277, and 316. Positions 335 to 362 are disordered; the sequence is AQGLRPRTVSSPIPYTPSPSSSRPISPG. Thr-342 is subject to Phosphothreonine. Positions 344-361 are enriched in low complexity; it reads SSPIPYTPSPSSSRPISP. Phosphoserine is present on residues Ser-356 and Ser-360. Arg-380 carries the post-translational modification Omega-N-methylarginine. A phosphoserine mark is found at Ser-388 and Ser-406. The tract at residues 394–469 is disordered; the sequence is QHMGASHGIT…QHPVHPSSQP (76 aa). Over residues 419–444 the composition is skewed to pro residues; sequence PTPPPSPNTQSPVQPPPPPPPPPMQP. Residues 435-444 carry the SH3-binding motif; that stretch reads PPPPPPPMQP. Low complexity predominate over residues 460–469; the sequence is QHPVHPSSQP.

It localises to the cytoplasm. The protein resides in the cytoskeleton. The sequence is that of Coiled-coil domain-containing protein 6 (Ccdc6) from Mus musculus (Mouse).